The following is a 347-amino-acid chain: Histone deacetylase 11 (347 aa).

The histone deacetylase stretch occupies residues 14-318 (KRWPIVYSPR…ARIIADSILN (305 aa)). The active site involves histidine 143.

The protein belongs to the histone deacetylase family. Interacts with HDAC6.

The protein resides in the nucleus. The catalysed reaction is N(6)-acetyl-L-lysyl-[histone] + H2O = L-lysyl-[histone] + acetate. Its function is as follows. Responsible for the deacetylation of lysine residues on the N-terminal part of the core histones (H2A, H2B, H3 and H4). Histone deacetylation gives a tag for epigenetic repression and plays an important role in transcriptional regulation, cell cycle progression and developmental events. Histone deacetylases act via the formation of large multiprotein complexes. The polypeptide is Histone deacetylase 11 (Hdac11) (Mus musculus (Mouse)).